The chain runs to 489 residues: GTPase Der (489 aa).

EngA-type G domains lie at 3-166 (PVVA…AEAM) and 200-373 (IKLA…ESAT). GTP contacts are provided by residues 9–16 (GRPNVGKS), 56–60 (DTGGI), 118–121 (NKVD), 206–213 (GKPNVGKS), 253–257 (DTAGV), and 318–321 (NKWD). The KH-like domain maps to 374-458 (RRVSTSMLTR…PIQVRFQEGG (85 aa)).

The protein belongs to the TRAFAC class TrmE-Era-EngA-EngB-Septin-like GTPase superfamily. EngA (Der) GTPase family. Associates with the 50S ribosomal subunit.

Its function is as follows. GTPase that plays an essential role in the late steps of ribosome biogenesis. The polypeptide is GTPase Der (Shewanella loihica (strain ATCC BAA-1088 / PV-4)).